A 54-amino-acid chain; its full sequence is Potassium channel toxin alpha-KTx 14.x (54 aa).

The signal sequence occupies residues 1-23; the sequence is MKIFFAILLILAVCSMAIWTVNG. 3 disulfides stabilise this stretch: cysteine 30/cysteine 46, cysteine 36/cysteine 51, and cysteine 40/cysteine 53.

It belongs to the short scorpion toxin superfamily. Potassium channel inhibitor family. Alpha-KTx 14 subfamily. As to expression, expressed by the venom gland.

The protein localises to the secreted. Potassium channels inhibitor. This Olivierus martensii (Manchurian scorpion) protein is Potassium channel toxin alpha-KTx 14.x.